Reading from the N-terminus, the 233-residue chain is Triosephosphate isomerase (233 aa).

Residue 8-10 coordinates substrate; it reads NWK. His-91 (electrophile) is an active-site residue. Catalysis depends on Glu-155, which acts as the Proton acceptor. The substrate site is built by Gly-161 and Ser-192.

It belongs to the triosephosphate isomerase family. As to quaternary structure, homodimer.

The protein localises to the cytoplasm. It carries out the reaction D-glyceraldehyde 3-phosphate = dihydroxyacetone phosphate. Its pathway is carbohydrate biosynthesis; gluconeogenesis. The protein operates within carbohydrate degradation; glycolysis; D-glyceraldehyde 3-phosphate from glycerone phosphate: step 1/1. Functionally, involved in the gluconeogenesis. Catalyzes stereospecifically the conversion of dihydroxyacetone phosphate (DHAP) to D-glyceraldehyde-3-phosphate (G3P). The protein is Triosephosphate isomerase of Wolbachia sp. subsp. Brugia malayi (strain TRS).